Here is an 88-residue protein sequence, read N- to C-terminus: Phosphocarrier protein HPr (88 aa).

One can recognise an HPr domain in the interval Met1–Glu88. Residue His15 is the Pros-phosphohistidine intermediate of the active site. Ser46 is modified (phosphoserine; by HPrK/P).

It belongs to the HPr family.

The protein localises to the cytoplasm. With respect to regulation, phosphorylation on Ser-46 inhibits the phosphoryl transfer from enzyme I to HPr. General (non sugar-specific) component of the phosphoenolpyruvate-dependent sugar phosphotransferase system (sugar PTS). This major carbohydrate active-transport system catalyzes the phosphorylation of incoming sugar substrates concomitantly with their translocation across the cell membrane. The phosphoryl group from phosphoenolpyruvate (PEP) is transferred to the phosphoryl carrier protein HPr by enzyme I. Phospho-HPr then transfers it to the PTS EIIA domain. Functionally, P-Ser-HPr interacts with the catabolite control protein A (CcpA), forming a complex that binds to DNA at the catabolite response elements cre, operator sites preceding a large number of catabolite-regulated genes. Thus, P-Ser-HPr is a corepressor in carbon catabolite repression (CCR), a mechanism that allows bacteria to coordinate and optimize the utilization of available carbon sources. P-Ser-HPr also plays a role in inducer exclusion, in which it probably interacts with several non-PTS permeases and inhibits their transport activity. In Lacticaseibacillus casei (Lactobacillus casei), this protein is Phosphocarrier protein HPr (ptsH).